Consider the following 207-residue polypeptide: Fibroblast growth factor 18 (207 aa).

A signal peptide spans 1-27 (MYSAPSTCTCLCLHFLLLCFQVQVLAA). A glycan (N-linked (GlcNAc...) asparagine) is linked at Asn39. Cys109 and Cys127 are oxidised to a cystine. An N-linked (GlcNAc...) asparagine glycan is attached at Asn137.

This sequence belongs to the heparin-binding growth factors family. In terms of assembly, interacts with FGFR3 and FGFR4.

Its subcellular location is the secreted. Functionally, plays an important role in the regulation of cell proliferation, cell differentiation and cell migration. Required for normal ossification and bone development. Stimulates hepatic and intestinal proliferation. The sequence is that of Fibroblast growth factor 18 (FGF18) from Bos taurus (Bovine).